The primary structure comprises 229 residues: Dihydrofolate reductase (229 aa).

Residues 11-227 (SITAVVAATA…VKYIFEMWVL (217 aa)) form the DHFR domain. NADP(+)-binding positions include alanine 17 and 23-29 (GIGLNGG). 37 to 42 (EMKYFA) provides a ligand contact to substrate. 64 to 66 (RKT) contacts NADP(+). Arginine 80 contacts substrate. NADP(+) contacts are provided by residues 86–88 (SGK) and 127–134 (GGATLYTS).

This sequence belongs to the dihydrofolate reductase family. Monomer.

It carries out the reaction (6S)-5,6,7,8-tetrahydrofolate + NADP(+) = 7,8-dihydrofolate + NADPH + H(+). Its pathway is cofactor biosynthesis; tetrahydrofolate biosynthesis; 5,6,7,8-tetrahydrofolate from 7,8-dihydrofolate: step 1/1. Key enzyme in folate metabolism. Catalyzes an essential reaction for de novo glycine and purine synthesis, and for DNA precursor synthesis. The chain is Dihydrofolate reductase (DFR1) from Cryptococcus neoformans var. neoformans serotype D (strain JEC21 / ATCC MYA-565) (Filobasidiella neoformans).